The sequence spans 220 residues: Large ribosomal subunit protein bL9 (220 aa).

Residues 167-184 are compositionally biased toward low complexity; the sequence is AAAEVEQAEDVAAAEQQD. The interval 167-220 is disordered; the sequence is AAAEVEQAEDVAAAEQQDSSPVDDHADDADGATGGEGRDEGAGDASDGEEMPST.

It belongs to the bacterial ribosomal protein bL9 family.

In terms of biological role, binds to the 23S rRNA. In Anaplasma marginale (strain St. Maries), this protein is Large ribosomal subunit protein bL9.